The primary structure comprises 225 residues: MMYHIPGVLSPQDVARFREQLEQAEWVDGRVTTGAQGAQVKNNQQVDTRSTLYAALQNEVLNAVNQHALFFAAALPRTLSTPLFNRYQNNETYGFHVDGAVRSHPQNGWMRTDLSATLFLSDPESYDGGELVVNDTFGQHRVKLPAGDLVLYPSSSLHCVTPVTRGVRVASFMWIQSMIRDDKKRAMLFELDNNIQSLKSHYGESEEILSLLNLYHNLLREWSEI.

Positions Thr-78 to Ser-177 constitute a Fe2OG dioxygenase domain. Residues His-96, Asp-98, and His-158 each contribute to the Fe cation site. Residue Arg-168 participates in 2-oxoglutarate binding.

Fe(2+) is required as a cofactor. L-ascorbate serves as cofactor.

This is PKHD-type hydroxylase YbiX from Escherichia coli (strain SMS-3-5 / SECEC).